Reading from the N-terminus, the 248-residue chain is 3-deoxy-manno-octulosonate cytidylyltransferase (248 aa).

Belongs to the KdsB family.

Its subcellular location is the cytoplasm. The catalysed reaction is 3-deoxy-alpha-D-manno-oct-2-ulosonate + CTP = CMP-3-deoxy-beta-D-manno-octulosonate + diphosphate. It functions in the pathway nucleotide-sugar biosynthesis; CMP-3-deoxy-D-manno-octulosonate biosynthesis; CMP-3-deoxy-D-manno-octulosonate from 3-deoxy-D-manno-octulosonate and CTP: step 1/1. It participates in bacterial outer membrane biogenesis; lipopolysaccharide biosynthesis. Activates KDO (a required 8-carbon sugar) for incorporation into bacterial lipopolysaccharide in Gram-negative bacteria. The protein is 3-deoxy-manno-octulosonate cytidylyltransferase of Salmonella paratyphi A (strain ATCC 9150 / SARB42).